The chain runs to 251 residues: MSGHSKWATTKHKKAILDSRRAKSFAKLIKNIEVAARMGGPDLAGNPSLELAVTKAKKTSVPADNIDRAIKRGAGLTGEVVDYTEIMYECRGPQGSALLIECLTDNKNRAASEVRLAISRNGGTIADPGSVSYLFSRKGVVTLPKNGLSEDDVLMAVLDAGAEEVKDNGETFEIHSDPKDLQAVRDALKDAGIDYDTDEAEFVPSMEVPLDLDAAKKFMKLVDALEELDDVQNVYSNADLSDEVQAALEAE.

It belongs to the TACO1 family.

The protein resides in the cytoplasm. In Arthrobacter sp. (strain FB24), this protein is Probable transcriptional regulatory protein Arth_2304.